The following is a 339-amino-acid chain: Senescence-specific cysteine protease SAG39 (339 aa).

The N-terminal stretch at 1–23 (MAMAKALLFAILGCLCLCSAVLA) is a signal peptide. 3 cysteine pairs are disulfide-bonded: Cys144/Cys187, Cys178/Cys220, and Cys276/Cys328. Residue Cys147 is part of the active site. Catalysis depends on residues His282 and Asn303.

The protein belongs to the peptidase C1 family. Low expression in mature leaves.

It is found in the vacuole. In terms of biological role, cysteine protease that may have a developmental senescence specific cell death function during apoptosis, heavy metal detoxification, and hypersensitive response. The sequence is that of Senescence-specific cysteine protease SAG39 from Oryza sativa subsp. japonica (Rice).